Reading from the N-terminus, the 22-residue chain is Alpha-amylase inhibitor DR4 (22 aa).

A disordered region spans residues 1-22; sequence SGGGKEAAETFNRVESHPRPDA.

Functionally, inhibits insect alpha-amylases. In Delonix regia (Royal poinciana), this protein is Alpha-amylase inhibitor DR4.